Here is a 508-residue protein sequence, read N- to C-terminus: Glycerol kinase (508 aa).

Position 14 (Thr-14) interacts with ADP. ATP-binding residues include Thr-14, Thr-15, and Ser-16. Residue Thr-14 participates in sn-glycerol 3-phosphate binding. Arg-18 contributes to the ADP binding site. Sn-glycerol 3-phosphate is bound by residues Arg-84, Glu-85, and Tyr-136. Residues Arg-84, Glu-85, and Tyr-136 each contribute to the glycerol site. His-232 is subject to Phosphohistidine; by HPr. Position 246 (Asp-246) interacts with sn-glycerol 3-phosphate. Glycerol-binding residues include Asp-246 and Gln-247. Thr-268 and Gly-311 together coordinate ADP. Thr-268, Gly-311, Gln-315, and Gly-412 together coordinate ATP. Positions 412 and 416 each coordinate ADP.

The protein belongs to the FGGY kinase family. In terms of assembly, homotetramer and homodimer (in equilibrium). The phosphoenolpyruvate-dependent sugar phosphotransferase system (PTS), including enzyme I, and histidine-containing protein (HPr) are required for the phosphorylation, which leads to the activation of the enzyme.

The catalysed reaction is glycerol + ATP = sn-glycerol 3-phosphate + ADP + H(+). It participates in polyol metabolism; glycerol degradation via glycerol kinase pathway; sn-glycerol 3-phosphate from glycerol: step 1/1. Its activity is regulated as follows. Activated by phosphorylation and inhibited by fructose 1,6-bisphosphate (FBP). Key enzyme in the regulation of glycerol uptake and metabolism. Catalyzes the phosphorylation of glycerol to yield sn-glycerol 3-phosphate. The sequence is that of Glycerol kinase from Streptococcus pyogenes serotype M3 (strain ATCC BAA-595 / MGAS315).